Consider the following 494-residue polypeptide: Monocarboxylate transporter 1 (494 aa).

The Cytoplasmic portion of the chain corresponds to 1-22; it reads MPPAIGGPVGYTPPDGGWGWAV. Residues 23–44 form a helical membrane-spanning segment; it reads VVGAFISIGFSYAFPKSITVFF. K38 lines the (S)-lactate pocket. Topologically, residues 45-55 are extracellular; that stretch reads KEIEIIFSATT. Residues 56-80 form a helical membrane-spanning segment; sequence SEVSWISSIMLAVMYAGGPISSILV. Residues 81–84 lie on the Cytoplasmic side of the membrane; that stretch reads NKYG. Residues 85–105 traverse the membrane as a helical segment; that stretch reads SRPVMIAGGCLSGCGLIAASF. Topologically, residues 106–109 are extracellular; the sequence is CNTV. Residues 110 to 132 form a helical membrane-spanning segment; the sequence is QELYFCIGVIGGLGLAFNLNPAL. Topologically, residues 133 to 146 are cytoplasmic; sequence TMIGKYFYKKRPLA. A helical membrane pass occupies residues 147-169; the sequence is NGLAMAGSPVFLSTLAPLNQAFF. Topologically, residues 170 to 174 are extracellular; sequence GIFGW. Residues 175–194 traverse the membrane as a helical segment; that stretch reads RGSFLILGGLLLNCCVAGSL. The Cytoplasmic portion of the chain corresponds to 195-254; the sequence is MRPIGPQQGKVEKLKSKESLQEAGKSDANTDLIGGSPKGEKLSVFQTVNKFLDLSLFTHR. S210, S213, and S220 each carry phosphoserine. Position 224 is a phosphothreonine (T224). S230 carries the post-translational modification Phosphoserine. The helical transmembrane segment at 255 to 281 threads the bilayer; sequence GFLLYLSGNVVMFFGLFTPLVFLSNYG. Over 282-288 the chain is Extracellular; sequence KSKHFSS. Residues 289–310 form a helical membrane-spanning segment; that stretch reads EKSAFLLSILAFVDMVARPSMG. D302 is a H(+) binding site. Residue R306 coordinates (S)-lactate. At 311–321 the chain is on the cytoplasmic side; that stretch reads LAANTRWIRPR. The chain crosses the membrane as a helical span at residues 322 to 342; the sequence is VQYFFAASVVANGVCHLLAPL. Residues 343-346 lie on the Extracellular side of the membrane; the sequence is STTY. Residues 347–368 form a helical membrane-spanning segment; it reads VGFCIYAGVFGFAFGWLSSVLF. Topologically, residues 369 to 382 are cytoplasmic; the sequence is ETLMDLVGPQRFSS. The helical transmembrane segment at 383–403 threads the bilayer; it reads AVGLVTIVECCPVLLGPPLLG. Topologically, residues 404 to 414 are extracellular; that stretch reads RLNDMYGDYKY. Residues 415 to 436 form a helical membrane-spanning segment; the sequence is TYWACGVILIIAGLYLFIGMGI. The Cytoplasmic portion of the chain corresponds to 437–494; sequence NYRLVAKEQKAEEKKRDGKEDETSTDVDEKPKKTMKETQSPAPLQNSSGDPAEEESPV. The span at 446–472 shows a compositional bias: basic and acidic residues; sequence KAEEKKRDGKEDETSTDVDEKPKKTMK. Residues 446–494 form a disordered region; the sequence is KAEEKKRDGKEDETSTDVDEKPKKTMKETQSPAPLQNSSGDPAEEESPV. T459 is subject to Phosphothreonine. S460 carries the phosphoserine modification. Position 461 is a phosphothreonine (T461). The span at 473–485 shows a compositional bias: polar residues; sequence ETQSPAPLQNSSG. Phosphoserine occurs at positions 476, 483, 484, and 492.

It belongs to the major facilitator superfamily. Monocarboxylate porter (TC 2.A.1.13) family. As to quaternary structure, interacts with BSG. Interacts with EMB. Interaction with either BSG or EMB is required for expression at the cell membrane. As to expression, detected in erythrocytes (at protein level). Detected in brain, heart, kidney, lung, muscle, jejunum enterocytes and brain capillaries.

It is found in the cell membrane. It localises to the basolateral cell membrane. Its subcellular location is the apical cell membrane. The enzyme catalyses (S)-lactate(in) + H(+)(in) = (S)-lactate(out) + H(+)(out). It carries out the reaction pyruvate(out) + H(+)(out) = pyruvate(in) + H(+)(in). It catalyses the reaction acetoacetate(out) + H(+)(out) = acetoacetate(in) + H(+)(in). The catalysed reaction is (S)-3-hydroxybutanoate(out) + H(+)(out) = (S)-3-hydroxybutanoate(in) + H(+)(in). The enzyme catalyses (R)-3-hydroxybutanoate(out) + H(+)(out) = (R)-3-hydroxybutanoate(in) + H(+)(in). It carries out the reaction 3-methyl-2-oxobutanoate(out) + H(+)(out) = 3-methyl-2-oxobutanoate(in) + H(+)(in). It catalyses the reaction 4-methyl-2-oxopentanoate(out) + H(+)(out) = 4-methyl-2-oxopentanoate(in) + H(+)(in). With respect to regulation, inhibited by stilbene disulfonates, such as di-isothiocyanostilbene disulfonate(DIDS), a cross-linking reagent that forms covalent linkages with lysine groups. In terms of biological role, bidirectional proton-coupled monocarboxylate transporter. Catalyzes the rapid transport across the plasma membrane of many monocarboxylates such as lactate, pyruvate, acetate and the ketone bodies acetoacetate and beta-hydroxybutyrate, and thus contributes to the maintenance of intracellular pH. The transport direction is determined by the proton motive force and the concentration gradient of the substrate monocarboxylate. MCT1 is a major lactate exporter. Plays a role in cellular responses to a high-fat diet by modulating the cellular levels of lactate and pyruvate that contribute to the regulation of central metabolic pathways and insulin secretion, with concomitant effects on plasma insulin levels and blood glucose homeostasis. Facilitates the protonated monocarboxylate form of succinate export, that its transient protonation upon muscle cell acidification in exercising muscle and ischemic heart. Functions via alternate outward- and inward-open conformation states. Protonation and deprotonation of 302-Asp is essential for the conformational transition. This is Monocarboxylate transporter 1 (Slc16a1) from Rattus norvegicus (Rat).